Here is a 34-residue protein sequence, read N- to C-terminus: DDIT3 upstream open reading frame protein (34 aa).

As to quaternary structure, interacts with DDIT3 (isoform 1).

The protein resides in the nucleus. It is found in the cytoplasm. Functionally, product of the upstream open reading frame (uORF) of DDIT3/CHOP that is specifically produced in absence of stress, thereby preventing translation of downstream stress effector DDIT3/CHOP. This chain is DDIT3 upstream open reading frame protein, found in Mus musculus (Mouse).